We begin with the raw amino-acid sequence, 311 residues long: Coproporphyrin III ferrochelatase (311 aa).

Residues Tyr12, Arg29, 45 to 46 (RY), Ser53, and Tyr124 each bind Fe-coproporphyrin III. His182 and Glu263 together coordinate Fe(2+).

This sequence belongs to the ferrochelatase family.

The protein localises to the cytoplasm. The catalysed reaction is Fe-coproporphyrin III + 2 H(+) = coproporphyrin III + Fe(2+). It functions in the pathway porphyrin-containing compound metabolism; protoheme biosynthesis. Involved in coproporphyrin-dependent heme b biosynthesis. Catalyzes the insertion of ferrous iron into coproporphyrin III to form Fe-coproporphyrin III. In Bacillus mycoides (strain KBAB4) (Bacillus weihenstephanensis), this protein is Coproporphyrin III ferrochelatase.